The chain runs to 251 residues: Flap endonuclease Xni (251 aa).

Residue D104 participates in Mg(2+) binding. The 5'-3' exonuclease domain occupies 160-249; the sequence is VQPQQLPDYW…IDGNLQQLRL (90 aa). K(+) contacts are provided by L171, A172, P180, V182, and I185. The tract at residues 184–189 is interaction with DNA; that stretch reads GIGPKS.

The protein belongs to the Xni family. The cofactor is Mg(2+). K(+) is required as a cofactor.

In terms of biological role, has flap endonuclease activity. During DNA replication, flap endonucleases cleave the 5'-overhanging flap structure that is generated by displacement synthesis when DNA polymerase encounters the 5'-end of a downstream Okazaki fragment. This is Flap endonuclease Xni from Escherichia coli O6:K15:H31 (strain 536 / UPEC).